We begin with the raw amino-acid sequence, 386 residues long: Patatin-10 (386 aa).

The first 23 residues, 1 to 23 (MATTKSFLILFFMILATTSSTCA), serve as a signal peptide directing secretion. Residues 32–229 (LSIDGGGIKG…TVGDPALLSL (198 aa)) form the PNPLA domain. A GXGXXG motif is present at residues 36–41 (GGGIKG). The GXSXG signature appears at 75–79 (GTSTG). Catalysis depends on serine 77, which acts as the Nucleophile. N-linked (GlcNAc...) asparagine glycosylation occurs at asparagine 115. Residue aspartate 215 is the Proton acceptor of the active site. The DGA/G signature appears at 215 to 217 (DGG). A coiled-coil region spans residues 321–384 (ENALTGTTTE…NRKKLRANKA (64 aa)).

This sequence belongs to the patatin family. Tuber.

It is found in the vacuole. Its function is as follows. Probable lipolytic acyl hydrolase (LAH), an activity which is thought to be involved in the response of tubers to pathogens. The chain is Patatin-10 from Solanum tuberosum (Potato).